The primary structure comprises 699 residues: Elongation factor G (699 aa).

One can recognise a tr-type G domain in the interval Glu-8–Val-290. GTP is bound by residues Ala-17–Thr-24, Asp-88–His-92, and Asn-142–Asp-145.

It belongs to the TRAFAC class translation factor GTPase superfamily. Classic translation factor GTPase family. EF-G/EF-2 subfamily.

It localises to the cytoplasm. Its function is as follows. Catalyzes the GTP-dependent ribosomal translocation step during translation elongation. During this step, the ribosome changes from the pre-translocational (PRE) to the post-translocational (POST) state as the newly formed A-site-bound peptidyl-tRNA and P-site-bound deacylated tRNA move to the P and E sites, respectively. Catalyzes the coordinated movement of the two tRNA molecules, the mRNA and conformational changes in the ribosome. The protein is Elongation factor G of Acidithiobacillus ferrooxidans (strain ATCC 23270 / DSM 14882 / CIP 104768 / NCIMB 8455) (Ferrobacillus ferrooxidans (strain ATCC 23270)).